The chain runs to 268 residues: Ribosomal RNA small subunit methyltransferase A (268 aa).

The S-adenosyl-L-methionine site is built by asparagine 23, isoleucine 25, glycine 50, glutamate 72, aspartate 97, and asparagine 116.

The protein belongs to the class I-like SAM-binding methyltransferase superfamily. rRNA adenine N(6)-methyltransferase family. RsmA subfamily.

It localises to the cytoplasm. It carries out the reaction adenosine(1518)/adenosine(1519) in 16S rRNA + 4 S-adenosyl-L-methionine = N(6)-dimethyladenosine(1518)/N(6)-dimethyladenosine(1519) in 16S rRNA + 4 S-adenosyl-L-homocysteine + 4 H(+). Functionally, specifically dimethylates two adjacent adenosines (A1518 and A1519) in the loop of a conserved hairpin near the 3'-end of 16S rRNA in the 30S particle. May play a critical role in biogenesis of 30S subunits. This chain is Ribosomal RNA small subunit methyltransferase A, found in Rickettsia bellii (strain OSU 85-389).